The following is a 75-amino-acid chain: UPF0512 protein D (75 aa).

Positions M1–S20 are disordered.

This sequence belongs to the UPF0512 family.

The chain is UPF0512 protein D from Dictyostelium discoideum (Social amoeba).